A 269-amino-acid chain; its full sequence is Gap junction gamma-3 protein (269 aa).

Residues 1 to 33 (MLLLELPIKCRMCGRFLRQLLAQESQHSTPVGR) lie on the Extracellular side of the membrane. The chain crosses the membrane as a helical span at residues 34 to 54 (FLLPMLMGFRLLILVSSGPGV). The Cytoplasmic portion of the chain corresponds to 55 to 86 (FGNDENEFICHLGQPGCKTICYDVFRPLSPLR). A helical membrane pass occupies residues 87 to 107 (FWAFQVILMAVPSAIYVAFTL). Over 108–145 (YHVIGYWEVPGKENKEQETQISKGDHSKDVSGAKSLKL) the chain is Extracellular. Residues 146–166 (LWAYVAHLGVRLALEGAALGV) form a helical membrane-spanning segment. Over 167–205 (QYNLYGFKMSSTFICREDPCIGSTTCFQSHPSEKTIFLN) the chain is Cytoplasmic. The chain crosses the membrane as a helical span at residues 206 to 226 (IMFGISGACFLFIFLELALLG). Residues 227 to 269 (LGRFWRIYKHKLSFLKKLPTSESSVRSKDTTDELSVVEAKEPF) are Extracellular-facing. Residue Ser-261 is modified to Phosphoserine.

Belongs to the connexin family. Gamma-type subfamily. In terms of assembly, a connexon is composed of a hexamer of connexins. As to expression, CNS specific. Expression is restricted to brain, spinal cord, and sciatic nerve.

The protein resides in the cell membrane. It localises to the cell junction. The protein localises to the gap junction. One gap junction consists of a cluster of closely packed pairs of transmembrane channels, the connexons, through which materials of low MW diffuse from one cell to a neighboring cell. In Mus musculus (Mouse), this protein is Gap junction gamma-3 protein (Gjc3).